Consider the following 360-residue polypeptide: Mediator of RNA polymerase II transcription subunit 6 (360 aa).

2 disordered regions span residues 186 to 238 (PAQP…NDPL) and 316 to 360 (AAAA…PGAA). Composition is skewed to low complexity over residues 190 to 205 (SAGAGAASGTTNYTAS) and 316 to 325 (AAAAAANANA).

This sequence belongs to the Mediator complex subunit 6 family. In terms of assembly, component of the Mediator complex.

It localises to the nucleus. In terms of biological role, component of the Mediator complex, a coactivator involved in the regulated transcription of nearly all RNA polymerase II-dependent genes. Mediator functions as a bridge to convey information from gene-specific regulatory proteins to the basal RNA polymerase II transcription machinery. Mediator is recruited to promoters by direct interactions with regulatory proteins and serves as a scaffold for the assembly of a functional preinitiation complex with RNA polymerase II and the general transcription factors. The protein is Mediator of RNA polymerase II transcription subunit 6 (med-6) of Neurospora crassa (strain ATCC 24698 / 74-OR23-1A / CBS 708.71 / DSM 1257 / FGSC 987).